Consider the following 212-residue polypeptide: Thaumatin-like protein 1b (212 aa).

7 disulfides stabilise this stretch: cysteine 47–cysteine 57, cysteine 62–cysteine 69, cysteine 117–cysteine 200, cysteine 122–cysteine 183, cysteine 130–cysteine 146, cysteine 150–cysteine 159, and cysteine 160–cysteine 170.

Belongs to the thaumatin family.

The protein resides in the secreted. This Malus domestica (Apple) protein is Thaumatin-like protein 1b.